The sequence spans 100 residues: ESAT-6-like protein EsxT (100 aa).

It belongs to the WXG100 family. ESAT-6 subfamily. As to quaternary structure, forms a tight 1:1 complex with EsxU.

The protein resides in the secreted. The polypeptide is ESAT-6-like protein EsxT (Mycobacterium tuberculosis (strain CDC 1551 / Oshkosh)).